The sequence spans 229 residues: MQRLAKIISNAGICSRRDAEKLILEGQVKVDGITILSPATNVDISNQIEVSGILINQSQKPRLWIYYKPVGLITTHKDPLSRKTVFEQLTGLPRVISIGRLDLNSEGLLLLTNSGDLARQFELPSNRLKRVYHVRAYGKSDILLKSDYKNLEIDGIFYNPHSIKLFKQNKSNSWFEVVLFEGKNREIRRIFEYFGLKVNKLIRIQYGSFTIDNLKPGAYKEINNKILEK.

The S4 RNA-binding domain maps to 2-69 (QRLAKIISNA…KPRLWIYYKP (68 aa)). The Nucleophile role is filled by Asp-102.

It belongs to the pseudouridine synthase RsuA family.

It carries out the reaction a uridine in RNA = a pseudouridine in RNA. This is an uncharacterized protein from Rickettsia felis (strain ATCC VR-1525 / URRWXCal2) (Rickettsia azadi).